A 404-amino-acid polypeptide reads, in one-letter code: Protein translocase subunit SecF (404 aa).

The next 6 helical transmembrane spans lie at 15–35 (KWYF…SMGA), 225–245 (LLAT…RFEL), 246–266 (IYGI…VGAF), 275–295 (LTVV…TIVV), 327–347 (ILTS…GGEV), and 355–375 (LVIG…PMLV).

It belongs to the SecD/SecF family. SecF subfamily. In terms of assembly, forms a complex with SecD. Part of the essential Sec protein translocation apparatus which comprises SecA, SecYEG and auxiliary proteins SecDF. Other proteins may also be involved.

The protein localises to the cell inner membrane. Its function is as follows. Part of the Sec protein translocase complex. Interacts with the SecYEG preprotein conducting channel. SecDF uses the proton motive force (PMF) to complete protein translocation after the ATP-dependent function of SecA. The polypeptide is Protein translocase subunit SecF (Koribacter versatilis (strain Ellin345)).